Reading from the N-terminus, the 452-residue chain is tRNA modification GTPase MnmE (452 aa).

Residues Arg-23, Glu-81, and Lys-120 each contribute to the (6S)-5-formyl-5,6,7,8-tetrahydrofolate site. The TrmE-type G domain occupies 217–373 (GIKTAIIGQT…LVLRINQMYL (157 aa)). Asn-227 is a binding site for K(+). GTP-binding positions include 227–232 (NVGKSS), 246–252 (TDIPGTT), and 271–274 (DTAG). Ser-231 contacts Mg(2+). K(+)-binding residues include Thr-246, Ile-248, and Thr-251. Thr-252 lines the Mg(2+) pocket. Lys-452 lines the (6S)-5-formyl-5,6,7,8-tetrahydrofolate pocket.

The protein belongs to the TRAFAC class TrmE-Era-EngA-EngB-Septin-like GTPase superfamily. TrmE GTPase family. Homodimer. Heterotetramer of two MnmE and two MnmG subunits. It depends on K(+) as a cofactor.

The protein resides in the cytoplasm. Its function is as follows. Exhibits a very high intrinsic GTPase hydrolysis rate. Involved in the addition of a carboxymethylaminomethyl (cmnm) group at the wobble position (U34) of certain tRNAs, forming tRNA-cmnm(5)s(2)U34. In Mycoplasma mycoides subsp. mycoides SC (strain CCUG 32753 / NCTC 10114 / PG1), this protein is tRNA modification GTPase MnmE.